Consider the following 405-residue polypeptide: Cysteine desulfurase IscS (405 aa).

Residues 75-76 (AT), Asn-156, Gln-184, and 204-206 (SAH) contribute to the pyridoxal 5'-phosphate site. Lys-207 is modified (N6-(pyridoxal phosphate)lysine). Position 244 (Thr-244) interacts with pyridoxal 5'-phosphate. The active-site Cysteine persulfide intermediate is Cys-329. Cys-329 lines the [2Fe-2S] cluster pocket.

This sequence belongs to the class-V pyridoxal-phosphate-dependent aminotransferase family. NifS/IscS subfamily. Homodimer. Forms a heterotetramer with IscU, interacts with other sulfur acceptors. Requires pyridoxal 5'-phosphate as cofactor.

Its subcellular location is the cytoplasm. The catalysed reaction is (sulfur carrier)-H + L-cysteine = (sulfur carrier)-SH + L-alanine. The protein operates within cofactor biosynthesis; iron-sulfur cluster biosynthesis. In terms of biological role, master enzyme that delivers sulfur to a number of partners involved in Fe-S cluster assembly, tRNA modification or cofactor biosynthesis. Catalyzes the removal of elemental sulfur atoms from cysteine to produce alanine. Functions as a sulfur delivery protein for Fe-S cluster synthesis onto IscU, an Fe-S scaffold assembly protein, as well as other S acceptor proteins. In Acinetobacter baumannii (strain SDF), this protein is Cysteine desulfurase IscS.